The sequence spans 106 residues: Replication restart protein PriB (106 aa).

One can recognise an SSB domain in the interval 4-103 (VNRLVLSGTV…LHAEQIELID (100 aa)).

This sequence belongs to the PriB family. Homodimer. Interacts with PriA and DnaT. Component of the replication restart primosome. Primosome assembly occurs via a 'hand-off' mechanism. PriA binds to replication forks, subsequently PriB then DnaT bind; DnaT then displaces ssDNA to generate the helicase loading substrate.

Involved in the restart of stalled replication forks, which reloads the replicative helicase on sites other than the origin of replication; the PriA-PriB pathway is the major replication restart pathway. During primosome assembly it facilitates complex formation between PriA and DnaT on DNA; stabilizes PriA on DNA. Stimulates the DNA unwinding activity of PriA helicase. In Pectobacterium carotovorum subsp. carotovorum (strain PC1), this protein is Replication restart protein PriB.